The sequence spans 254 residues: Gamma-glutamyl-gamma-aminobutyrate hydrolase (254 aa).

The 235-residue stretch at 16 to 250 (RNRLKGHATQ…ITAWQHHIAE (235 aa)) folds into the Glutamine amidotransferase type-1 domain. C114 serves as the catalytic Nucleophile. Residues H222 and E224 contribute to the active site.

It belongs to the peptidase C26 family.

It catalyses the reaction 4-(gamma-L-glutamylamino)butanoate + H2O = 4-aminobutanoate + L-glutamate. The protein operates within amine and polyamine degradation; putrescine degradation; 4-aminobutanoate from putrescine: step 4/4. Functionally, involved in the breakdown of putrescine via hydrolysis of the gamma-glutamyl linkage of gamma-glutamyl-gamma-aminobutyrate. In Shigella flexneri, this protein is Gamma-glutamyl-gamma-aminobutyrate hydrolase (puuD).